A 520-amino-acid chain; its full sequence is Transactivator/viroplasmin protein (520 aa).

A disordered region spans residues 486 to 520 (VQDASADSGPKDGPPPTRSIVEKEDVPTTSSKQVD).

The protein belongs to the caulimoviridae viroplasmin family.

The protein resides in the host cytoplasm. Functionally, enhances the ribosomal termination-reinitiation event leading to the translation of major open reading frames on the polycistronic viral RNAs. The sequence is that of Transactivator/viroplasmin protein from Cauliflower mosaic virus (strain BBC) (CaMV).